The chain runs to 143 residues: Nucleoside diphosphate kinase (143 aa).

Residues Lys-11, Phe-59, Arg-87, Thr-93, Arg-104, and Asn-114 each contribute to the ATP site. Residue His-117 is the Pros-phosphohistidine intermediate of the active site.

The protein belongs to the NDK family. Homotetramer. It depends on Mg(2+) as a cofactor.

It is found in the cytoplasm. The catalysed reaction is a 2'-deoxyribonucleoside 5'-diphosphate + ATP = a 2'-deoxyribonucleoside 5'-triphosphate + ADP. It catalyses the reaction a ribonucleoside 5'-diphosphate + ATP = a ribonucleoside 5'-triphosphate + ADP. Functionally, major role in the synthesis of nucleoside triphosphates other than ATP. The ATP gamma phosphate is transferred to the NDP beta phosphate via a ping-pong mechanism, using a phosphorylated active-site intermediate. The protein is Nucleoside diphosphate kinase of Shewanella sp. (strain W3-18-1).